A 315-amino-acid polypeptide reads, in one-letter code: Glycine--tRNA ligase alpha subunit (315 aa).

This sequence belongs to the class-II aminoacyl-tRNA synthetase family. In terms of assembly, tetramer of two alpha and two beta subunits.

The protein resides in the cytoplasm. It catalyses the reaction tRNA(Gly) + glycine + ATP = glycyl-tRNA(Gly) + AMP + diphosphate. The sequence is that of Glycine--tRNA ligase alpha subunit from Pseudomonas syringae pv. tomato (strain ATCC BAA-871 / DC3000).